The primary structure comprises 410 residues: Sporulation killing factor maturation protein SkfB (410 aa).

Residues 103 to 314 form the Radical SAM core domain; sequence SYLPISCTLQ…LREARHKWGD (212 aa). The [4Fe-4S] cluster site is built by cysteine 117, cysteine 121, cysteine 124, cysteine 380, cysteine 385, and cysteine 387.

It belongs to the radical SAM superfamily. [4Fe-4S] cluster is required as a cofactor.

The protein resides in the cytoplasm. Functionally, catalyzes the formation of the thioether bond required for production of the sporulation killing factor (SKF) from SkfA. Forms the cysteine-methionine thioether bond found in SKF; the acceptor amino acid can be hydrophobic, aromatic or a small hydrophilic amino acid but not a larger hydrophilic amino acid, i.e. Met=Ala, Phe, Leu, Tyr&gt;Asn, Ser&gt;&gt;Gln, Glu, Lys. The relative position of Cys and Met in the substrate cannot be inverted, in vitro the thioether bond cannot be made in the absence of the SkfA propeptide, suggesting this is the first reaction in SKF maturation. In vitro, in the absence of a second substrate, cleaves S-adenosyl-L-methionine into Met and 5'-dA. The protein is Sporulation killing factor maturation protein SkfB of Bacillus subtilis (strain 168).